The following is a 131-amino-acid chain: UPF0102 protein YraN (131 aa).

Polar residues predominate over residues 1-19 (MATVPTRSGSPRQLTTKQT). Residues 1–20 (MATVPTRSGSPRQLTTKQTG) form a disordered region.

The protein belongs to the UPF0102 family.

This chain is UPF0102 protein YraN, found in Escherichia coli O8 (strain IAI1).